The chain runs to 214 residues: Protein FAM167A (214 aa).

2 disordered regions span residues 1-26 (MSVP…PDDH) and 59-108 (PFPR…LSTG). The stretch at 118-156 (EAIAWLRKELTEMRLQDQQLARQLMRLRGDINKLKIEHT) forms a coiled coil.

The protein belongs to the FAM167 (SEC) family. Expressed in skin, including primary keratinocytes, spleen, kidney, leukocytes, testis, lung, small intestine and prostate.

The protein is Protein FAM167A (FAM167A) of Homo sapiens (Human).